The sequence spans 248 residues: MAGHSQFKNIMHKKGKQDAIRSKLFSKLAREITVAAKLGLPDPNMNARLRAAVIAARVENMPKDNIERAIKKASGADAENYDEVRYEGYGPGGVAVIVEALTDNRNRTAGEIRSYFTKVGGALAETGAVSFMFDHIGRIEFPAKVGSEEAMLEAAIEAGAEDVLSGEEGHEVLTSLEMLRDVALALEAKFGEPTRASLIWKPQNTISLDDETGEKVLRLIGLLEDNDDVQNVYANYEVSEAVLAKLEA.

This sequence belongs to the TACO1 family.

The protein resides in the cytoplasm. In Methylocella silvestris (strain DSM 15510 / CIP 108128 / LMG 27833 / NCIMB 13906 / BL2), this protein is Probable transcriptional regulatory protein Msil_2305.